The primary structure comprises 235 residues: MFTLIVILAVSYLIGSIPTSIIAGRLLKGIDIRDFGSGNAGGTNAFRVLGWKAGLTVTILDIVKGAIAAISVVVFFESHPIGPLPDINPIALRLIAGLSAVFGHVFTVFAGFKGGKGVSTAAGMMFGIAPVTTLIVLGVFLLVVFLSRYVSVASILAAIAFPVIIAVRKYLFDLGEGLDYYIRMFNTNVFIHDSLDYHLLIFGFIVAAAIMYTHRANIRRLLSGKENRVKFHGHS.

Helical transmembrane passes span 2-22 (FTLIVILAVSYLIGSIPTSII), 56-76 (TVTILDIVKGAIAAISVVVFF), 94-114 (LIAGLSAVFGHVFTVFAGFKG), 126-146 (FGIAPVTTLIVLGVFLLVVFL), 152-172 (VASILAAIAFPVIIAVRKYLF), and 190-210 (FIHDSLDYHLLIFGFIVAAAI).

It belongs to the PlsY family. Probably interacts with PlsX.

The protein resides in the cell inner membrane. The enzyme catalyses an acyl phosphate + sn-glycerol 3-phosphate = a 1-acyl-sn-glycero-3-phosphate + phosphate. Its pathway is lipid metabolism; phospholipid metabolism. Functionally, catalyzes the transfer of an acyl group from acyl-phosphate (acyl-PO(4)) to glycerol-3-phosphate (G3P) to form lysophosphatidic acid (LPA). This enzyme utilizes acyl-phosphate as fatty acyl donor, but not acyl-CoA or acyl-ACP. The sequence is that of Glycerol-3-phosphate acyltransferase from Chlorobium phaeobacteroides (strain BS1).